The sequence spans 65 residues: Seminal plasma acrosin inhibitor A1 (65 aa).

Residues 1–59 enclose the Kazal-like domain; sequence TRKQPNCNVYRSHLFFCTRQMDPICGTNGKSYANPCIFCSEKGLRNQKFDFGHWGHCRE. 3 cysteine pairs are disulfide-bonded: Cys-7/Cys-39, Cys-17/Cys-36, and Cys-25/Cys-57. Ser-12 carries O-linked (GalNAc...) serine glycosylation. Ser-62 carries an O-linked (GalNAc...) serine glycan.

Post-translationally, the identity of the O-linked saccharides are not reported in Ref.1. The O-linked polysaccharides on Ser-12 and Ser-62 are probably the mucin type linked to GalNAc. In terms of tissue distribution, seminal plasma.

It localises to the secreted. Its function is as follows. Inhibits acrosin. This chain is Seminal plasma acrosin inhibitor A1, found in Sus scrofa (Pig).